Reading from the N-terminus, the 77-residue chain is Acyl carrier protein (77 aa).

Positions 1-76 (MSIEERVKKI…SAIDYVAKAN (76 aa)) constitute a Carrier domain. Residue Ser36 is modified to O-(pantetheine 4'-phosphoryl)serine.

Belongs to the acyl carrier protein (ACP) family. 4'-phosphopantetheine is transferred from CoA to a specific serine of apo-ACP by AcpS. This modification is essential for activity because fatty acids are bound in thioester linkage to the sulfhydryl of the prosthetic group.

It localises to the cytoplasm. It functions in the pathway lipid metabolism; fatty acid biosynthesis. Functionally, carrier of the growing fatty acid chain in fatty acid biosynthesis. This is Acyl carrier protein from Haemophilus ducreyi (strain 35000HP / ATCC 700724).